Here is a 493-residue protein sequence, read N- to C-terminus: Probable cytosol aminopeptidase (493 aa).

K258 and D263 together coordinate Mn(2+). Residue K270 is part of the active site. Residues D281, D340, and E342 each coordinate Mn(2+). Residue R344 is part of the active site.

This sequence belongs to the peptidase M17 family. The cofactor is Mn(2+).

It is found in the cytoplasm. The enzyme catalyses Release of an N-terminal amino acid, Xaa-|-Yaa-, in which Xaa is preferably Leu, but may be other amino acids including Pro although not Arg or Lys, and Yaa may be Pro. Amino acid amides and methyl esters are also readily hydrolyzed, but rates on arylamides are exceedingly low.. It carries out the reaction Release of an N-terminal amino acid, preferentially leucine, but not glutamic or aspartic acids.. Presumably involved in the processing and regular turnover of intracellular proteins. Catalyzes the removal of unsubstituted N-terminal amino acids from various peptides. In Caulobacter vibrioides (strain ATCC 19089 / CIP 103742 / CB 15) (Caulobacter crescentus), this protein is Probable cytosol aminopeptidase.